Consider the following 274-residue polypeptide: Ribosome biogenesis protein UTP30 (274 aa).

Belongs to the universal ribosomal protein uL1 family. Highly divergent. Component of the 90S pre-ribosomes. Interacts with FAF1.

The protein resides in the nucleus. It is found in the nucleolus. Its function is as follows. Involved in rRNA-processing and ribosome biosynthesis. The polypeptide is Ribosome biogenesis protein UTP30 (UTP30) (Saccharomyces cerevisiae (strain ATCC 204508 / S288c) (Baker's yeast)).